Consider the following 171-residue polypeptide: Neuronal vesicle trafficking-associated protein 2 (171 aa).

The interval 1–21 is disordered; the sequence is MVKLNGNPGEKGAKPPSVEDG. Residues 1–71 are Cytoplasmic-facing; it reads MVKLNGNPGE…FRVPKIAEFT (71 aa). Residues 72–92 traverse the membrane as a helical; Signal-anchor for type II membrane protein segment; that stretch reads VTILVSLALAFLACIVFLVVY. Over 93 to 171 the chain is Lumenal; sequence KAFTYDHSCP…EPKPPKTQGH (79 aa).

This sequence belongs to the NSG family.

The protein localises to the membrane. It is found in the golgi apparatus. Its subcellular location is the trans-Golgi network membrane. The protein resides in the cell projection. It localises to the dendrite. The protein localises to the endosome membrane. It is found in the early endosome membrane. Its subcellular location is the late endosome membrane. The protein resides in the lysosome lumen. It localises to the cytoplasmic vesicle membrane. The protein localises to the golgi stack membrane. It is found in the endosome. Its subcellular location is the multivesicular body membrane. The protein is Neuronal vesicle trafficking-associated protein 2 of Rattus norvegicus (Rat).